The sequence spans 150 residues: Macrodomain Ter protein (150 aa).

The protein belongs to the MatP family. Homodimer.

The protein resides in the cytoplasm. Functionally, required for spatial organization of the terminus region of the chromosome (Ter macrodomain) during the cell cycle. Prevents early segregation of duplicated Ter macrodomains during cell division. Binds specifically to matS, which is a 13 bp signature motif repeated within the Ter macrodomain. The polypeptide is Macrodomain Ter protein (Salmonella agona (strain SL483)).